Consider the following 1206-residue polypeptide: DNA polymerase beta (1206 aa).

A run of 4 repeats spans residues 1071–1074, 1075–1078, 1079–1082, and 1083–1086. The 4 X 4 AA tandem repeats of A-G-[NK]-[PA] stretch occupies residues 1071–1086; it reads AGNPAGNPAGNPAGNA.

The protein belongs to the DNA polymerase type-B family.

It carries out the reaction DNA(n) + a 2'-deoxyribonucleoside 5'-triphosphate = DNA(n+1) + diphosphate. In terms of biological role, DNA-directed DNA polymerase involved in viral DNA replication. This Ornithodoros (relapsing fever ticks) protein is DNA polymerase beta.